Reading from the N-terminus, the 220-residue chain is Protein GrpE (220 aa).

Belongs to the GrpE family. In terms of assembly, homodimer.

Its subcellular location is the cytoplasm. Functionally, participates actively in the response to hyperosmotic and heat shock by preventing the aggregation of stress-denatured proteins, in association with DnaK and GrpE. It is the nucleotide exchange factor for DnaK and may function as a thermosensor. Unfolded proteins bind initially to DnaJ; upon interaction with the DnaJ-bound protein, DnaK hydrolyzes its bound ATP, resulting in the formation of a stable complex. GrpE releases ADP from DnaK; ATP binding to DnaK triggers the release of the substrate protein, thus completing the reaction cycle. Several rounds of ATP-dependent interactions between DnaJ, DnaK and GrpE are required for fully efficient folding. This Bartonella quintana (strain Toulouse) (Rochalimaea quintana) protein is Protein GrpE.